Here is a 445-residue protein sequence, read N- to C-terminus: uncharacterized protein (445 aa).

A run of 8 helical transmembrane segments spans residues 16-36, 52-72, 98-118, 168-188, 219-239, 243-263, 283-303, and 366-386; these read IVSLGVTASSFLFINGVAFLI, LLASMPSWGLVVTMFAWGYLL, VHSLLWIGVFLFLGGMAAGGC, GLMFPAVVCTLAAVASVLGIV, ASALLMMPQTVTVTFMLVWLI, GWSVAQAGVLVTISQLLGALG, LIAAAAAATLFLLAAVDNEGS, and AAYPTAWALCGVFPLAAVPLV. A disordered region spans residues 417-445; it reads AWPNGPRRPGPPGQPRRVRQGGTAITPPT.

Belongs to the major facilitator superfamily.

It localises to the cell membrane. This is an uncharacterized protein from Mycobacterium tuberculosis (strain CDC 1551 / Oshkosh).